The following is a 135-amino-acid chain: Large ribosomal subunit protein bL19 (135 aa).

Belongs to the bacterial ribosomal protein bL19 family.

This protein is located at the 30S-50S ribosomal subunit interface and may play a role in the structure and function of the aminoacyl-tRNA binding site. In Xanthomonas euvesicatoria pv. vesicatoria (strain 85-10) (Xanthomonas campestris pv. vesicatoria), this protein is Large ribosomal subunit protein bL19.